The following is a 660-amino-acid chain: MVTSLNEDNESVTVEWIENGDTKGKEIDLESIFSLNPDLVPDEDIEPSPETPPPPTSSAKVNKIVKNRRTVASIKNEPPPRDNRVVGSARARPSQLPEQSSSAQQNARRKSNCVKEVEKLQEKREKRRLQQQELREKRAQDVDATNPNYEIMCMIRDFRGSLDYRPLTTADPIDEHRICVCVRKRPLNKKETQMKDLDVITIPSKDVVMVHEPKQKVDLTRYLENQTFRFDYAFDDSAPNEMVYRFTARPLVETIFERGMATCFAYGQTGSGKTHTMGGDFSGKNQDCSKGIYALAARDVFLMLKKPNYKKLELQVNATFFEIYSGKVFDLLNRKTKLRVLEDGKQQVQVVGLQEREVKCVEDVLKLIDIGNSCRTSGQTSANAHSSRSHAVFQIILRRKGKLHGKFSLIDLAGNERGADTSSADRQTRLEGAEINKSLLAHKECIRALGRNKPHTPFRASKLTQVLRDSFIGENSRTCMIATISPGMASCENTLNTLRYANRVKELTVDPTAAGDVRPIMHHPPNQIDDLEAQWGVGSSPQRDDLKLLCEQNEEEVSPQLFTFHEAVSQMVEMEEQVVEDHRAVFQESIRWLEDEKALLEMTEEVDYDVDSYATQLEAILEQKIDILTELRDKVKSFRAALQEEEQASKQINPKRPRAL.

The interval 1–140 is disordered; the sequence is MVTSLNEDNE…QQELREKRAQ (140 aa). The globular stretch occupies residues 1–171; that stretch reads MVTSLNEDNE…LDYRPLTTAD (171 aa). Residue Ser-48 is modified to Phosphoserine. Phosphothreonine is present on residues Thr-51 and Thr-70. Ser-73 is modified (phosphoserine). Position 75 is an N6-acetyllysine (Lys-75). Positions 96 to 106 are enriched in polar residues; it reads LPEQSSSAQQN. Residues 113 to 140 show a composition bias toward basic and acidic residues; it reads CVKEVEKLQEKREKRRLQQQELREKRAQ. In terms of domain architecture, Kinesin motor spans 177–507; it reads RICVCVRKRP…LRYANRVKEL (331 aa). Residue 267–274 coordinates ATP; that stretch reads GQTGSGKT. The stretch at 614-653 forms a coiled coil; that stretch reads ATQLEAILEQKIDILTELRDKVKSFRAALQEEEQASKQIN.

It belongs to the TRAFAC class myosin-kinesin ATPase superfamily. Kinesin family. MCAK/KIF2 subfamily. Interacts with AURKA and PLK1. Interacts with PSRC1. Interacts with MCRS1; the interaction enhances recruitment of KIF2A to the minus ends of spindle microtubules which promotes chromosome alignment.

Its subcellular location is the cytoplasm. It localises to the cytoskeleton. The protein resides in the microtubule organizing center. It is found in the centrosome. The protein localises to the spindle pole. Its subcellular location is the spindle. In terms of biological role, plus end-directed microtubule-dependent motor required for normal brain development. May regulate microtubule dynamics during axonal growth. Required for normal progression through mitosis. Required for normal congress of chromosomes at the metaphase plate. Required for normal spindle dynamics during mitosis. Promotes spindle turnover. Implicated in formation of bipolar mitotic spindles. Has microtubule depolymerization activity. This Bos taurus (Bovine) protein is Kinesin-like protein KIF2A (KIF2A).